The following is an 89-amino-acid chain: Small ribosomal subunit protein uS15 (89 aa).

It belongs to the universal ribosomal protein uS15 family. Part of the 30S ribosomal subunit. Forms a bridge to the 50S subunit in the 70S ribosome, contacting the 23S rRNA.

Functionally, one of the primary rRNA binding proteins, it binds directly to 16S rRNA where it helps nucleate assembly of the platform of the 30S subunit by binding and bridging several RNA helices of the 16S rRNA. Forms an intersubunit bridge (bridge B4) with the 23S rRNA of the 50S subunit in the ribosome. The chain is Small ribosomal subunit protein uS15 from Bacillus anthracis (strain CDC 684 / NRRL 3495).